A 527-amino-acid polypeptide reads, in one-letter code: 4-alpha-glucanotransferase (527 aa).

It belongs to the disproportionating enzyme family.

The protein localises to the cytoplasm. The catalysed reaction is Transfers a segment of a (1-&gt;4)-alpha-D-glucan to a new position in an acceptor, which may be glucose or a (1-&gt;4)-alpha-D-glucan.. The polypeptide is 4-alpha-glucanotransferase (malQ) (Chlamydia muridarum (strain MoPn / Nigg)).